A 203-amino-acid polypeptide reads, in one-letter code: Holliday junction branch migration complex subunit RuvA (203 aa).

Positions 1-61 (MIIYKYGKIM…EYTKVTYGFD (61 aa)) are domain I. Positions 62-139 (NFKELVIFED…KFMKKLTSDE (78 aa)) are domain II. The segment at 140–147 (AAKIKVPA) is flexible linker. The segment at 147–203 (ASSENENKFLDTMKMLGFKQQQIKFALDKIELNDDIETCVENAIKLISQQQHETSRV) is domain III.

It belongs to the RuvA family. Homotetramer. Forms an RuvA(8)-RuvB(12)-Holliday junction (HJ) complex. HJ DNA is sandwiched between 2 RuvA tetramers; dsDNA enters through RuvA and exits via RuvB. An RuvB hexamer assembles on each DNA strand where it exits the tetramer. Each RuvB hexamer is contacted by two RuvA subunits (via domain III) on 2 adjacent RuvB subunits; this complex drives branch migration. In the full resolvosome a probable DNA-RuvA(4)-RuvB(12)-RuvC(2) complex forms which resolves the HJ.

Its subcellular location is the cytoplasm. Functionally, the RuvA-RuvB-RuvC complex processes Holliday junction (HJ) DNA during genetic recombination and DNA repair, while the RuvA-RuvB complex plays an important role in the rescue of blocked DNA replication forks via replication fork reversal (RFR). RuvA specifically binds to HJ cruciform DNA, conferring on it an open structure. The RuvB hexamer acts as an ATP-dependent pump, pulling dsDNA into and through the RuvAB complex. HJ branch migration allows RuvC to scan DNA until it finds its consensus sequence, where it cleaves and resolves the cruciform DNA. In Metamycoplasma arthritidis (strain 158L3-1) (Mycoplasma arthritidis), this protein is Holliday junction branch migration complex subunit RuvA.